The following is a 238-amino-acid chain: DNA repair protein RecO (238 aa).

The protein belongs to the RecO family.

In terms of biological role, involved in DNA repair and RecF pathway recombination. This is DNA repair protein RecO from Cereibacter sphaeroides (strain ATCC 17023 / DSM 158 / JCM 6121 / CCUG 31486 / LMG 2827 / NBRC 12203 / NCIMB 8253 / ATH 2.4.1.) (Rhodobacter sphaeroides).